The primary structure comprises 217 residues: Uracil-DNA glycosylase (217 aa).

Asp-62 functions as the Proton acceptor in the catalytic mechanism.

Belongs to the uracil-DNA glycosylase (UDG) superfamily. UNG family.

It is found in the cytoplasm. The catalysed reaction is Hydrolyzes single-stranded DNA or mismatched double-stranded DNA and polynucleotides, releasing free uracil.. Functionally, excises uracil residues from the DNA which can arise as a result of misincorporation of dUMP residues by DNA polymerase or due to deamination of cytosine. The polypeptide is Uracil-DNA glycosylase (Streptococcus pyogenes serotype M6 (strain ATCC BAA-946 / MGAS10394)).